The primary structure comprises 413 residues: Putative glutamate--cysteine ligase 2 (413 aa).

The tract at residues 392–413 is disordered; it reads GGVCALSTPQGDPLPGWAERLH.

Belongs to the glutamate--cysteine ligase type 2 family. YbdK subfamily.

The enzyme catalyses L-cysteine + L-glutamate + ATP = gamma-L-glutamyl-L-cysteine + ADP + phosphate + H(+). ATP-dependent carboxylate-amine ligase which exhibits weak glutamate--cysteine ligase activity. The sequence is that of Putative glutamate--cysteine ligase 2 from Bordetella bronchiseptica (strain ATCC BAA-588 / NCTC 13252 / RB50) (Alcaligenes bronchisepticus).